Consider the following 66-residue polypeptide: Stress-induced protein KIN2 (66 aa).

The span at Met1–Gln10 shows a compositional bias: polar residues. A disordered region spans residues Met1–Glu20. 2 consecutive repeats follow at residues Asp31–Ala35 and Asp49–Gly53.

As to quaternary structure, interacts with DEK3. In terms of tissue distribution, expressed at high levels in embryos and mature seeds.

This Arabidopsis thaliana (Mouse-ear cress) protein is Stress-induced protein KIN2.